A 202-amino-acid chain; its full sequence is Holliday junction branch migration complex subunit RuvA (202 aa).

The interval 1 to 63 (MIAFLSGRVV…EDSLTLFGFA (63 aa)) is domain I. The segment at 64–142 (DDDERDTFER…EPGGDTAATP (79 aa)) is domain II. The interval 143–152 (EQSAAAAPRN) is flexible linker. The tract at residues 152-202 (NWRAQVVSGLVNLGWSTREAEAAADAVAAEAGEQPDVAALLRSALRRLSRA) is domain III.

It belongs to the RuvA family. In terms of assembly, homotetramer. Forms an RuvA(8)-RuvB(12)-Holliday junction (HJ) complex. HJ DNA is sandwiched between 2 RuvA tetramers; dsDNA enters through RuvA and exits via RuvB. An RuvB hexamer assembles on each DNA strand where it exits the tetramer. Each RuvB hexamer is contacted by two RuvA subunits (via domain III) on 2 adjacent RuvB subunits; this complex drives branch migration. In the full resolvosome a probable DNA-RuvA(4)-RuvB(12)-RuvC(2) complex forms which resolves the HJ.

It is found in the cytoplasm. Functionally, the RuvA-RuvB-RuvC complex processes Holliday junction (HJ) DNA during genetic recombination and DNA repair, while the RuvA-RuvB complex plays an important role in the rescue of blocked DNA replication forks via replication fork reversal (RFR). RuvA specifically binds to HJ cruciform DNA, conferring on it an open structure. The RuvB hexamer acts as an ATP-dependent pump, pulling dsDNA into and through the RuvAB complex. HJ branch migration allows RuvC to scan DNA until it finds its consensus sequence, where it cleaves and resolves the cruciform DNA. This Thermobifida fusca (strain YX) protein is Holliday junction branch migration complex subunit RuvA.